We begin with the raw amino-acid sequence, 421 residues long: Trimethyllysine dioxygenase, mitochondrial (421 aa).

The transit peptide at 1 to 15 (MWYHKLLHQQSRLRN) directs the protein to the mitochondrion. 2 positions are modified to N6-acetyllysine: lysine 179 and lysine 236. Fe cation contacts are provided by histidine 242, aspartate 244, and histidine 389.

This sequence belongs to the gamma-BBH/TMLD family. As to quaternary structure, homodimer. Requires Fe(2+) as cofactor. L-ascorbate is required as a cofactor.

The protein localises to the mitochondrion matrix. The enzyme catalyses N(6),N(6),N(6)-trimethyl-L-lysine + 2-oxoglutarate + O2 = (3S)-3-hydroxy-N(6),N(6),N(6)-trimethyl-L-lysine + succinate + CO2. The protein operates within amine and polyamine biosynthesis; carnitine biosynthesis. Its function is as follows. Converts trimethyllysine (TML) into hydroxytrimethyllysine (HTML). The chain is Trimethyllysine dioxygenase, mitochondrial (Tmlhe) from Mus musculus (Mouse).